Reading from the N-terminus, the 445-residue chain is NAD(P)H coenzyme A polysulfide/persulfide reductase (445 aa).

Residue 16-17 participates in FAD binding; that stretch reads AA. Arginine 27 provides a ligand contact to CoA. Residues 38–39 and 45–47 each bind FAD; these read EA and HAP. CoA-binding positions include 44 to 48, 65 to 66, and arginine 75; these read SHAPC and YY. Residue cysteine 48 is the Redox-active of the active site. FAD is bound by residues valine 85, aspartate 283, and alanine 301. CoA contacts are provided by asparagine 305 and lysine 361. Tyrosine 425 contacts FAD. Residues tryptophan 433 and arginine 441 each coordinate CoA.

This sequence belongs to the class-III pyridine nucleotide-disulfide oxidoreductase family. In terms of assembly, homodimer. Homotetramer. FAD is required as a cofactor.

It catalyses the reaction NADP(+) + 2 CoA = CoA-disulfide + NADPH + H(+). The catalysed reaction is NAD(+) + 2 CoA = CoA-disulfide + NADH + H(+). In terms of biological role, catalyzes the NAD(P)H-dependent reduction of polysulfide, CoA-polysulfides, and CoA persulfide, as well as the reduction of a range of other small persulfides, including TNB and glutathione persulfides. The likely in vivo substrates are di-, poly-, and persulfide derivatives of coenzyme A, although polysulfide itself is also efficiently reduced. Shows coenzyme A disulfide reductase (CoADR) activity with both NADH and NADPH, with a preference for NADPH. May also play a role in the reduction of elemental sulfur. The polypeptide is NAD(P)H coenzyme A polysulfide/persulfide reductase (Pyrococcus horikoshii (strain ATCC 700860 / DSM 12428 / JCM 9974 / NBRC 100139 / OT-3)).